The chain runs to 185 residues: Large ribosomal subunit protein uL5 (185 aa).

It belongs to the universal ribosomal protein uL5 family. In terms of assembly, part of the 50S ribosomal subunit; part of the 5S rRNA/L5/L18/L25 subcomplex. Contacts the 5S rRNA and the P site tRNA. Forms a bridge to the 30S subunit in the 70S ribosome.

Its function is as follows. This is one of the proteins that bind and probably mediate the attachment of the 5S RNA into the large ribosomal subunit, where it forms part of the central protuberance. In the 70S ribosome it contacts protein S13 of the 30S subunit (bridge B1b), connecting the 2 subunits; this bridge is implicated in subunit movement. Contacts the P site tRNA; the 5S rRNA and some of its associated proteins might help stabilize positioning of ribosome-bound tRNAs. The sequence is that of Large ribosomal subunit protein uL5 from Caulobacter vibrioides (strain NA1000 / CB15N) (Caulobacter crescentus).